The following is a 103-amino-acid chain: Large ribosomal subunit protein uL24 (103 aa).

It belongs to the universal ribosomal protein uL24 family. Part of the 50S ribosomal subunit.

Its function is as follows. One of two assembly initiator proteins, it binds directly to the 5'-end of the 23S rRNA, where it nucleates assembly of the 50S subunit. In terms of biological role, one of the proteins that surrounds the polypeptide exit tunnel on the outside of the subunit. The sequence is that of Large ribosomal subunit protein uL24 from Dehalococcoides mccartyi (strain ATCC BAA-2266 / KCTC 15142 / 195) (Dehalococcoides ethenogenes (strain 195)).